A 441-amino-acid chain; its full sequence is Signal recognition particle 54 kDa protein (441 aa).

Residues 104–111, 186–190, and 244–247 each bind GTP; these read GLQGSGKT, DTAGR, and TKLD.

Belongs to the GTP-binding SRP family. SRP54 subfamily. In terms of assembly, part of the signal recognition particle protein translocation system, which is composed of SRP and FtsY. Archaeal SRP consists of a 7S RNA molecule of 300 nucleotides and two protein subunits: SRP54 and SRP19.

It localises to the cytoplasm. The enzyme catalyses GTP + H2O = GDP + phosphate + H(+). Functionally, involved in targeting and insertion of nascent membrane proteins into the cytoplasmic membrane. Binds to the hydrophobic signal sequence of the ribosome-nascent chain (RNC) as it emerges from the ribosomes. The SRP-RNC complex is then targeted to the cytoplasmic membrane where it interacts with the SRP receptor FtsY. This is Signal recognition particle 54 kDa protein from Staphylothermus marinus (strain ATCC 43588 / DSM 3639 / JCM 9404 / F1).